Consider the following 866-residue polypeptide: MENEKENLFFEPHKRGLMKTPLKESTAANIVLADIQPDFGPLTTPTKPKEISQGEPWTPTANLKMLISAVSPEIRNRDQKRGLFDNRNGLSDVKDCLHEHFSGDEYEKSQPSRKEKSLGLLCHKFLARYPNYPNPAVNNDICLDEVAEELNVERRRIYDIVNVLESLHMVSRLAKNRYTWHGRHNLNQILETLKSVGEENKYAEQIMMIKKKEYEQEFEVSKSYNTEDPIIKSNTGQNGHPDMCCAERPGVELRAASVNSRKDKSLKVMSQKFVTLFLVSTPQIVSLEIAAKILTWEDHVEDLDRSKFKTKIRRLYDIANVLSSLDLIKKVHVTEERGRKPAFKWTGPEISPNPSGLSPVLPCAASDLEARQSSKENCAKNLFSTRGKPNFTRHPSLIKLVKSIESDRRKINSAPSSPIKTHKAESTQNSVPFRSKMAQLAAICKMQLEEQSSEPRKNVTVQLAGSGHCKSVAPLDTPANAEPEMMAPSLIQPLGVVPLLPSPLSPAVPVILPQTPSGTSYAIYLQPAQAQTITPPPGLSPTVCPTTSSNAMISEDSTDATGENADSDAPKSSVSTRPGSLLPGPERQGAKNREREPAREKGSKRASMLEDSGSKKKFKEDQKAPENVSTTLFPSGYLIPLTQCSTLGAESILSSNENSGTLSPNHSIYSSPIAGVIPVTSSELTAVNFPSFQVTPLKLMVSPTSMAAVPVGNSPALSSSHPLPIQNPSSAIVNFTLQHLGLISPGVQVSTSPGPGTIAVSPRIEAVSVTPENAGAEQGRATKCDASILSQNQTNGQSFAGTGAQQPVPVTPKGSQPVAESFFRTPGGPTKPTGSPCTDFDGANYTSVGTLLVPQRKLEVSVEDVH.

Phosphoserine occurs at positions 71 and 102. 2 consecutive DNA-binding regions follow at residues 113–182 (RKEK…TWHG) and 261–347 (RKDK…KWTG). 3 disordered regions span residues 409-429 (RKIN…STQN), 532-632 (TITP…STTL), and 794-837 (TNGQ…GSPC). Phosphoserine is present on residues serine 413 and serine 417. Residues 543–552 (VCPTTSSNAM) are compositionally biased toward polar residues. Composition is skewed to basic and acidic residues over residues 588–603 (QGAK…EKGS) and 612–624 (SGSK…DQKA). The segment covering 794-805 (TNGQSFAGTGAQ) has biased composition (polar residues). The span at 825-834 (TPGGPTKPTG) shows a compositional bias: low complexity.

It belongs to the E2F/DP family. Homodimer and heterodimer: mainly forms homodimers and, to a lesser extent, heterodimers with E2F8. Dimerization is important for DNA-binding. Interacts with HIF1A.

Its subcellular location is the nucleus. Functionally, atypical E2F transcription factor that participates in various processes such as angiogenesis and polyploidization of specialized cells. Mainly acts as a transcription repressor that binds DNA independently of DP proteins and specifically recognizes the E2 recognition site 5'-TTTC[CG]CGC-3'. Directly represses transcription of classical E2F transcription factors such as E2F1: component of a feedback loop in S phase by repressing the expression of E2F1, thereby preventing p53/TP53-dependent apoptosis. Plays a key role in polyploidization of cells in placenta and liver by regulating the endocycle, probably by repressing genes promoting cytokinesis and antagonizing action of classical E2F proteins (E2F1, E2F2 and/or E2F3). Required for placental development by promoting polyploidization of trophoblast giant cells. Acts as a promoter of sprouting angiogenesis, possibly by acting as a transcription activator: associates with HIF1A, recognizes and binds the VEGFA promoter, which is different from canonical E2 recognition site, and activates expression of the VEGFA gene. The chain is Transcription factor E2F8 (E2F8) from Bos taurus (Bovine).